A 624-amino-acid polypeptide reads, in one-letter code: Leucine-rich repeat, immunoglobulin-like domain and transmembrane domain-containing protein 1 (624 aa).

Positions 1 to 21 are cleaved as a signal peptide; it reads MWVALGMLWLLALGGPHQAWG. The 38-residue stretch at 22 to 59 folds into the LRRNT domain; the sequence is FCPSECSCSLRILSDGSKARTVVCSDPDLTLPPASIPP. Residues 22 to 527 are Lumenal-facing; that stretch reads FCPSECSCSL…EVVDAEGTQR (506 aa). LRR repeat units lie at residues 60–81, 84–105, 108–129, 132–153, and 156–177; these read DTCKLRLERTAIRRVPGETFRP, RLEQLWLPYNALSELSALMLRG, RLRELRLPGNRLVTFPWAALRD, QLQLLDLQANRLSTLPPEAAHF, and NLTFLDLSNNQLMRLPEELLDV. N-linked (GlcNAc...) asparagine glycosylation occurs at Asn156. An LRRCT domain is found at 201–254; it reads NPWVCDCRLYDLVHLLDGWVSSNLIFIEARLRCASPRSLAGVAFSQLELRKCQS. Residues 267 to 336 form the Ig-like C2-type domain; sequence PLGSTVLLRC…YICQAKNFLG (70 aa). Cys276 and Cys329 are oxidised to a cystine. Asn297 and Asn456 each carry an N-linked (GlcNAc...) asparagine glycan. Residues 431–519 enclose the Fibronectin type-III domain; that stretch reads MVRSLKVVGD…QCVIFSTDEV (89 aa). Residues 526 to 549 form an LRR 6 repeat; the sequence is QRLINMVVISVAAIIALPPTLLVC. Residues 528–548 traverse the membrane as a helical segment; sequence LINMVVISVAAIIALPPTLLV. At 549–624 the chain is on the cytoplasmic side; that stretch reads CCGALRRRCH…GGRRINEYFC (76 aa).

May form a homodimer. Interacts with LRIT2; may form a heterodimer with LRIT2. Interacts (via its N-terminal extracellular domain) with metabotropic glutamate receptor GRM6. Interacts (via its extreme C-terminus) with the scaffold protein FRMPD2 (via the third PDZ domain); the interaction leads to their colocalization in photoreceptor synapses. In terms of tissue distribution, expressed predominantly in developing photoreceptor and bipolar cells.

The protein resides in the endoplasmic reticulum membrane. It localises to the cell projection. It is found in the dendrite. In terms of biological role, photoreceptor synaptic protein essential for normal vision. Involved in synapse formation in cone photoreceptor cells. The sequence is that of Leucine-rich repeat, immunoglobulin-like domain and transmembrane domain-containing protein 1 (Lrit1) from Mus musculus (Mouse).